The primary structure comprises 358 residues: Phosphoserine aminotransferase (358 aa).

Residue arginine 43 participates in L-glutamate binding. Positions 103, 153, 172, and 195 each coordinate pyridoxal 5'-phosphate. At lysine 196 the chain carries N6-(pyridoxal phosphate)lysine. Position 236-237 (236-237 (NT)) interacts with pyridoxal 5'-phosphate.

Belongs to the class-V pyridoxal-phosphate-dependent aminotransferase family. SerC subfamily. As to quaternary structure, homodimer. Pyridoxal 5'-phosphate is required as a cofactor.

Its subcellular location is the cytoplasm. The enzyme catalyses O-phospho-L-serine + 2-oxoglutarate = 3-phosphooxypyruvate + L-glutamate. The catalysed reaction is 4-(phosphooxy)-L-threonine + 2-oxoglutarate = (R)-3-hydroxy-2-oxo-4-phosphooxybutanoate + L-glutamate. It functions in the pathway amino-acid biosynthesis; L-serine biosynthesis; L-serine from 3-phospho-D-glycerate: step 2/3. It participates in cofactor biosynthesis; pyridoxine 5'-phosphate biosynthesis; pyridoxine 5'-phosphate from D-erythrose 4-phosphate: step 3/5. Catalyzes the reversible conversion of 3-phosphohydroxypyruvate to phosphoserine and of 3-hydroxy-2-oxo-4-phosphonooxybutanoate to phosphohydroxythreonine. This Dichelobacter nodosus (strain VCS1703A) protein is Phosphoserine aminotransferase.